Reading from the N-terminus, the 301-residue chain is tRNA dimethylallyltransferase (301 aa).

8–15 (GPTAVGKT) contributes to the ATP binding site. 10–15 (TAVGKT) serves as a coordination point for substrate. The interaction with substrate tRNA stretch occupies residues 33 to 36 (DSRQ).

The protein belongs to the IPP transferase family. Monomer. The cofactor is Mg(2+).

The enzyme catalyses adenosine(37) in tRNA + dimethylallyl diphosphate = N(6)-dimethylallyladenosine(37) in tRNA + diphosphate. Catalyzes the transfer of a dimethylallyl group onto the adenine at position 37 in tRNAs that read codons beginning with uridine, leading to the formation of N6-(dimethylallyl)adenosine (i(6)A). The protein is tRNA dimethylallyltransferase of Thermosipho africanus (strain TCF52B).